A 376-amino-acid chain; its full sequence is Succinyl-diaminopimelate desuccinylase (376 aa).

Histidine 66 is a Zn(2+) binding site. Residue aspartate 68 is part of the active site. Aspartate 99 contributes to the Zn(2+) binding site. Glutamate 133 (proton acceptor) is an active-site residue. Zn(2+)-binding residues include glutamate 134, glutamate 162, and histidine 349.

It belongs to the peptidase M20A family. DapE subfamily. Homodimer. The cofactor is Zn(2+). Co(2+) is required as a cofactor.

It catalyses the reaction N-succinyl-(2S,6S)-2,6-diaminopimelate + H2O = (2S,6S)-2,6-diaminopimelate + succinate. The protein operates within amino-acid biosynthesis; L-lysine biosynthesis via DAP pathway; LL-2,6-diaminopimelate from (S)-tetrahydrodipicolinate (succinylase route): step 3/3. Functionally, catalyzes the hydrolysis of N-succinyl-L,L-diaminopimelic acid (SDAP), forming succinate and LL-2,6-diaminopimelate (DAP), an intermediate involved in the bacterial biosynthesis of lysine and meso-diaminopimelic acid, an essential component of bacterial cell walls. This Vesicomyosocius okutanii subsp. Calyptogena okutanii (strain HA) protein is Succinyl-diaminopimelate desuccinylase.